The following is a 660-amino-acid chain: Glycogen debranching enzyme (660 aa).

The Nucleophile role is filled by Asp338. Catalysis depends on Glu373, which acts as the Proton donor. The segment covering 460–472 has biased composition (basic and acidic residues); the sequence is NEANGEDNRDGAW. Positions 460–482 are disordered; that stretch reads NEANGEDNRDGAWENHSNNHGYE.

This sequence belongs to the glycosyl hydrolase 13 family.

It carries out the reaction Hydrolysis of (1-&gt;6)-alpha-D-glucosidic linkages to branches with degrees of polymerization of three or four glucose residues in limit dextrin.. It functions in the pathway glycan degradation; glycogen degradation. Its function is as follows. Removes maltotriose and maltotetraose chains that are attached by 1,6-alpha-linkage to the limit dextrin main chain, generating a debranched limit dextrin. This is Glycogen debranching enzyme from Cronobacter sakazakii (strain ATCC BAA-894) (Enterobacter sakazakii).